The following is a 61-amino-acid chain: Insect toxin AaHIT5 (61 aa).

Positions 1-61 (DGYIKRHDGC…AWKSETNTCD (61 aa)) constitute an LCN-type CS-alpha/beta domain. Disulfide bonds link C10–C60, C14–C35, C21–C42, and C25–C44.

In terms of tissue distribution, expressed by the venom gland.

It is found in the secreted. Functionally, excitatory insect toxins induce a spastic paralysis. They bind voltage-independently to sodium channels (Nav) and shift the voltage of activation toward more negative potentials thereby affecting sodium channel activation and promoting spontaneous and repetitive firing. This toxin elicits excitatory activity with no flaccid paralysis despite its high degree of sequence similarity with other depressant insect toxins. This toxin is active only on insects. This Androctonus australis (Sahara scorpion) protein is Insect toxin AaHIT5.